A 218-amino-acid chain; its full sequence is Probable septum site-determining protein MinC (218 aa).

This sequence belongs to the MinC family. In terms of assembly, interacts with MinD and FtsZ.

In terms of biological role, cell division inhibitor that blocks the formation of polar Z ring septums. Rapidly oscillates between the poles of the cell to destabilize FtsZ filaments that have formed before they mature into polar Z rings. Prevents FtsZ polymerization. The protein is Probable septum site-determining protein MinC of Moorella thermoacetica (strain ATCC 39073 / JCM 9320).